A 451-amino-acid polypeptide reads, in one-letter code: PTS system galactitol-specific EIIC component (451 aa).

The PTS EIIC type-2 domain maps to 6–435 (MRYILDLGPT…IYLTGIFMTW (430 aa)). The next 10 membrane-spanning stretches (helical) occupy residues 9-29 (ILDLGPTVMLPIVIIIFSKIL), 41-61 (LHIGIGFVGIGLVIGLMLDSI), 92-112 (ASQIALVAIPIAILVNVAMLL), 138-158 (LATGSWMIGMAGVVIHAAFVY), 218-238 (FGPFGEPVTVGFVMGLIIGIL), 305-325 (AVVSASLIFIPLTILIAVCVP), 329-349 (VLPFGDLATIGFFVAMAVAVH), 357-377 (LISGVIIMSITLWIATQTIGL), 392-412 (GMVASMDQGGSPITWLLIQVF), and 415-435 (QNIPGFIIIGAIYLTGIFMTW).

Forms a complex with one each of subunit of GatA, GatB and 2 subunits of GatC.

It localises to the cell inner membrane. Its function is as follows. The phosphoenolpyruvate-dependent sugar phosphotransferase system (PTS), a major carbohydrate active transport system, catalyzes the phosphorylation of incoming sugar substrates concomitant with their translocation across the cell membrane. The enzyme II complex composed of GatA, GatB and GatC is involved in galactitol transport. The protein is PTS system galactitol-specific EIIC component (gatC) of Escherichia coli O157:H7.